We begin with the raw amino-acid sequence, 258 residues long: NAD kinase (258 aa).

Residue D51 is the Proton acceptor of the active site. NAD(+) is bound by residues 51 to 52 (DG), 119 to 120 (ND), K130, D149, 160 to 165 (TAYSLS), and A184.

This sequence belongs to the NAD kinase family. As to quaternary structure, homodimer. The cofactor is a divalent metal cation.

It localises to the cytoplasm. It catalyses the reaction NAD(+) + ATP = ADP + NADP(+) + H(+). Its function is as follows. Involved in the regulation of the intracellular balance between NAD(H) and NADP(H), and is a key enzyme in the biosynthesis of NADP. Catalyzes specifically the phosphorylation on 2'-hydroxyl of the adenosine moiety of NAD to yield NADP. The polypeptide is NAD kinase (NADK) (Thermotoga maritima (strain ATCC 43589 / DSM 3109 / JCM 10099 / NBRC 100826 / MSB8)).